Reading from the N-terminus, the 418-residue chain is Serine hydroxymethyltransferase (418 aa).

Residues Leu-121 and 125–127 each bind (6S)-5,6,7,8-tetrahydrofolate; that span reads GHL. Residue Lys-230 is modified to N6-(pyridoxal phosphate)lysine. Residue 355-357 participates in (6S)-5,6,7,8-tetrahydrofolate binding; the sequence is SPF.

This sequence belongs to the SHMT family. As to quaternary structure, homodimer. Requires pyridoxal 5'-phosphate as cofactor.

The protein localises to the cytoplasm. It catalyses the reaction (6R)-5,10-methylene-5,6,7,8-tetrahydrofolate + glycine + H2O = (6S)-5,6,7,8-tetrahydrofolate + L-serine. The protein operates within one-carbon metabolism; tetrahydrofolate interconversion. Its pathway is amino-acid biosynthesis; glycine biosynthesis; glycine from L-serine: step 1/1. Catalyzes the reversible interconversion of serine and glycine with tetrahydrofolate (THF) serving as the one-carbon carrier. This reaction serves as the major source of one-carbon groups required for the biosynthesis of purines, thymidylate, methionine, and other important biomolecules. Also exhibits THF-independent aldolase activity toward beta-hydroxyamino acids, producing glycine and aldehydes, via a retro-aldol mechanism. This is Serine hydroxymethyltransferase from Streptococcus pyogenes serotype M5 (strain Manfredo).